The primary structure comprises 120 residues: Seripauperin-10 (120 aa).

A signal peptide spans 1–20 (MVKLTSIAAGVAAIAATASA).

It belongs to the SRP1/TIP1 family. Seripauperin subfamily.

This Saccharomyces cerevisiae (strain ATCC 204508 / S288c) (Baker's yeast) protein is Seripauperin-10 (PAU10).